Reading from the N-terminus, the 319-residue chain is Transaldolase (319 aa).

The Schiff-base intermediate with substrate role is filled by Lys-125.

This sequence belongs to the transaldolase family. Type 1 subfamily. In terms of assembly, homodimer.

The protein localises to the cytoplasm. It catalyses the reaction D-sedoheptulose 7-phosphate + D-glyceraldehyde 3-phosphate = D-erythrose 4-phosphate + beta-D-fructose 6-phosphate. Its pathway is carbohydrate degradation; pentose phosphate pathway; D-glyceraldehyde 3-phosphate and beta-D-fructose 6-phosphate from D-ribose 5-phosphate and D-xylulose 5-phosphate (non-oxidative stage): step 2/3. In terms of biological role, transaldolase is important for the balance of metabolites in the pentose-phosphate pathway. The sequence is that of Transaldolase from Ralstonia nicotianae (strain ATCC BAA-1114 / GMI1000) (Ralstonia solanacearum).